The primary structure comprises 479 residues: Kynurenine 3-monooxygenase (479 aa).

Belongs to the aromatic-ring hydroxylase family. KMO subfamily. FAD is required as a cofactor.

It localises to the mitochondrion outer membrane. The catalysed reaction is L-kynurenine + NADPH + O2 + H(+) = 3-hydroxy-L-kynurenine + NADP(+) + H2O. It functions in the pathway cofactor biosynthesis; NAD(+) biosynthesis; quinolinate from L-kynurenine: step 1/3. Functionally, catalyzes the hydroxylation of L-kynurenine (L-Kyn) to form 3-hydroxy-L-kynurenine (L-3OHKyn). Required for synthesis of quinolinic acid. The sequence is that of Kynurenine 3-monooxygenase from Chaetomium globosum (strain ATCC 6205 / CBS 148.51 / DSM 1962 / NBRC 6347 / NRRL 1970) (Soil fungus).